A 290-amino-acid chain; its full sequence is Protoheme IX farnesyltransferase (290 aa).

The next 9 membrane-spanning stretches (helical) occupy residues 8-28, 36-56, 81-101, 108-128, 133-153, 163-183, 209-229, 230-247, and 270-290; these read LTKPGIIMGNLISVLAGYFLA, LSLLVYTMLGVALVIASGCVV, INIEFAFLFAIIMLLIGTGLL, LSAVMVLLGYVFYVFFYTMWY, VYGTLVGSVSGAIPPLVGYLA, VLLFGLFCLWQMPHSYAIAMF, IMIYVLVFSVVALGLYAFGHT, GYEYLAVVAISCYGWFKV, and LAITAFSTVLGIELLPFSITF.

Belongs to the UbiA prenyltransferase family. Protoheme IX farnesyltransferase subfamily.

The protein resides in the cell inner membrane. The enzyme catalyses heme b + (2E,6E)-farnesyl diphosphate + H2O = Fe(II)-heme o + diphosphate. Its pathway is porphyrin-containing compound metabolism; heme O biosynthesis; heme O from protoheme: step 1/1. Converts heme B (protoheme IX) to heme O by substitution of the vinyl group on carbon 2 of heme B porphyrin ring with a hydroxyethyl farnesyl side group. The sequence is that of Protoheme IX farnesyltransferase from Aliivibrio salmonicida (strain LFI1238) (Vibrio salmonicida (strain LFI1238)).